The following is a 253-amino-acid chain: MPQLIAGNWKMNGTLAGIAAYAAALRPASPGAELLVCPPAPLIAPLRAALDGAPVALGAQDCAVKRSGAHTGDLSADLLAELGATHVILGHSERRADHAESSATVREKARTAIAAGLVPIICVGETEAERDSGEAETVVRAQLAGSLPEELAGQTVPGVVAPGIIAYEPVWAIGTGRTPTEEDVAAMHASIRAALRRQLGAAGATMPILYGGSVKPSNAASLLALPEVGGALVGGASLKAEDFLAIASAAARD.

8 to 10 provides a ligand contact to substrate; sequence NWK. The active-site Electrophile is histidine 91. Glutamate 168 (proton acceptor) is an active-site residue. Substrate is bound by residues glycine 174, serine 213, and 234–235; that span reads GG.

This sequence belongs to the triosephosphate isomerase family. In terms of assembly, homodimer.

It localises to the cytoplasm. It carries out the reaction D-glyceraldehyde 3-phosphate = dihydroxyacetone phosphate. It participates in carbohydrate biosynthesis; gluconeogenesis. It functions in the pathway carbohydrate degradation; glycolysis; D-glyceraldehyde 3-phosphate from glycerone phosphate: step 1/1. Involved in the gluconeogenesis. Catalyzes stereospecifically the conversion of dihydroxyacetone phosphate (DHAP) to D-glyceraldehyde-3-phosphate (G3P). This Acidiphilium cryptum (strain JF-5) protein is Triosephosphate isomerase.